Consider the following 220-residue polypeptide: Telomere repeats-binding bouquet formation protein 2 (220 aa).

The protein belongs to the TERB2 family. In terms of assembly, component of the MAJIN-TERB1-TERB2 complex, composed of MAJIN, TERB1 and TERB2.

It localises to the chromosome. The protein localises to the telomere. Its subcellular location is the nucleus inner membrane. Functionally, meiosis-specific telomere-associated protein involved in meiotic telomere attachment to the nucleus inner membrane, a crucial step for homologous pairing and synapsis. Component of the MAJIN-TERB1-TERB2 complex, which promotes telomere cap exchange by mediating attachment of telomeric DNA to the inner nuclear membrane and replacement of the protective cap of telomeric chromosomes: in early meiosis, the MAJIN-TERB1-TERB2 complex associates with telomeric DNA and the shelterin/telosome complex. During prophase, the complex matures and promotes release of the shelterin/telosome complex from telomeric DNA. The protein is Telomere repeats-binding bouquet formation protein 2 (TERB2) of Homo sapiens (Human).